The sequence spans 375 residues: Queuine tRNA-ribosyltransferase (375 aa).

The Proton acceptor role is filled by Asp89. Substrate-binding positions include 89-93, Asp143, Gln187, and Gly214; that span reads DSGGF. An RNA binding region spans residues 245 to 251; the sequence is GVGKPED. Asp264 acts as the Nucleophile in catalysis. An RNA binding; important for wobble base 34 recognition region spans residues 269-273; sequence TRNAR. The Zn(2+) site is built by Cys302, Cys304, Cys307, and His333.

The protein belongs to the queuine tRNA-ribosyltransferase family. Homodimer. Within each dimer, one monomer is responsible for RNA recognition and catalysis, while the other monomer binds to the replacement base PreQ1. Requires Zn(2+) as cofactor.

It carries out the reaction 7-aminomethyl-7-carbaguanine + guanosine(34) in tRNA = 7-aminomethyl-7-carbaguanosine(34) in tRNA + guanine. Its pathway is tRNA modification; tRNA-queuosine biosynthesis. Its function is as follows. Catalyzes the base-exchange of a guanine (G) residue with the queuine precursor 7-aminomethyl-7-deazaguanine (PreQ1) at position 34 (anticodon wobble position) in tRNAs with GU(N) anticodons (tRNA-Asp, -Asn, -His and -Tyr). Catalysis occurs through a double-displacement mechanism. The nucleophile active site attacks the C1' of nucleotide 34 to detach the guanine base from the RNA, forming a covalent enzyme-RNA intermediate. The proton acceptor active site deprotonates the incoming PreQ1, allowing a nucleophilic attack on the C1' of the ribose to form the product. After dissociation, two additional enzymatic reactions on the tRNA convert PreQ1 to queuine (Q), resulting in the hypermodified nucleoside queuosine (7-(((4,5-cis-dihydroxy-2-cyclopenten-1-yl)amino)methyl)-7-deazaguanosine). In Photobacterium profundum (strain SS9), this protein is Queuine tRNA-ribosyltransferase.